The chain runs to 828 residues: Periplasmic nitrate reductase (828 aa).

Positions 1–31 (MKLSRRSFMKANAVAAAAAAAGLSVPGVARA) form a signal peptide, tat-type signal. One can recognise a 4Fe-4S Mo/W bis-MGD-type domain in the interval 39–95 (IKWDKAPCRFCGTGCGVLVGTQQGRVVACQGDPDAPVNRGLNCIKGYFLPKIMYGKD). Residues cysteine 46, cysteine 49, cysteine 53, and cysteine 81 each contribute to the [4Fe-4S] cluster site. Mo-bis(molybdopterin guanine dinucleotide)-binding positions include lysine 83, glutamine 150, asparagine 175, cysteine 179, 212–219 (WGANMAEM), 243–247 (STYQH), 262–264 (QSD), methionine 372, glutamine 376, asparagine 482, 508–509 (SD), lysine 531, aspartate 558, and 718–727 (TGRVLEHWHT). Substrate is bound at residue phenylalanine 794. Positions 802 and 819 each coordinate Mo-bis(molybdopterin guanine dinucleotide).

Belongs to the prokaryotic molybdopterin-containing oxidoreductase family. NasA/NapA/NarB subfamily. Component of the periplasmic nitrate reductase NapAB complex composed of NapA and NapB. The cofactor is [4Fe-4S] cluster. It depends on Mo-bis(molybdopterin guanine dinucleotide) as a cofactor. Post-translationally, predicted to be exported by the Tat system. The position of the signal peptide cleavage has not been experimentally proven.

Its subcellular location is the periplasm. The catalysed reaction is 2 Fe(II)-[cytochrome] + nitrate + 2 H(+) = 2 Fe(III)-[cytochrome] + nitrite + H2O. In terms of biological role, catalytic subunit of the periplasmic nitrate reductase complex NapAB. Receives electrons from NapB and catalyzes the reduction of nitrate to nitrite. This Shigella boydii serotype 18 (strain CDC 3083-94 / BS512) protein is Periplasmic nitrate reductase.